A 154-amino-acid chain; its full sequence is uncharacterized protein (154 aa).

Residues 1 to 143 form the HTH marR-type domain; sequence MTESERALLT…LRKLAGSLTK (143 aa). The H-T-H motif DNA-binding region spans 57–80; it reads LSKLAMSLDLKPASVTRMTDILYK.

This is an uncharacterized protein from Bacillus subtilis (strain 168).